We begin with the raw amino-acid sequence, 402 residues long: Acetate kinase (402 aa).

A Mg(2+)-binding site is contributed by N7. K14 is a binding site for ATP. Substrate is bound at residue R95. The active-site Proton donor/acceptor is the D152. ATP-binding positions include 212-216 (HLGNG), 286-288 (DMR), and 334-338 (GIGEN). E388 is a binding site for Mg(2+).

It belongs to the acetokinase family. Homodimer. Mg(2+) serves as cofactor. It depends on Mn(2+) as a cofactor.

It is found in the cytoplasm. It carries out the reaction acetate + ATP = acetyl phosphate + ADP. It participates in metabolic intermediate biosynthesis; acetyl-CoA biosynthesis; acetyl-CoA from acetate: step 1/2. Its function is as follows. Catalyzes the formation of acetyl phosphate from acetate and ATP. Can also catalyze the reverse reaction. This Oleidesulfovibrio alaskensis (strain ATCC BAA-1058 / DSM 17464 / G20) (Desulfovibrio alaskensis) protein is Acetate kinase.